Reading from the N-terminus, the 149-residue chain is Transcriptional repressor NrdR (149 aa).

A zinc finger spans residues 3–34 (CPFCGNRDTNVRDSRSVNEGTFIKRRRFCGEC). The region spanning 49-139 (IKVIKKNGSC…VYMNFENEKD (91 aa)) is the ATP-cone domain.

It belongs to the NrdR family. Zn(2+) is required as a cofactor.

Negatively regulates transcription of bacterial ribonucleotide reductase nrd genes and operons by binding to NrdR-boxes. The polypeptide is Transcriptional repressor NrdR (Neorickettsia sennetsu (strain ATCC VR-367 / Miyayama) (Ehrlichia sennetsu)).